A 218-amino-acid polypeptide reads, in one-letter code: Adenylate kinase (218 aa).

ATP is bound at residue 12–17 (GAGKGT). The segment at 32–61 (STGDMLREARSSGTEMGKRVAEVMDRGELV) is NMP. Residues threonine 33, arginine 38, 59 to 61 (ELV), 85 to 88 (GFPR), and glutamine 92 contribute to the AMP site. The LID stretch occupies residues 126 to 164 (GRFTCGNCGEVYHDVTKPTKEPGKCDVCGSTDLRRRADD). Arginine 127 is an ATP binding site. Zn(2+) is bound by residues cysteine 130 and cysteine 133. Position 136 to 137 (136 to 137 (VY)) interacts with ATP. 2 residues coordinate Zn(2+): cysteine 150 and cysteine 153. 2 residues coordinate AMP: arginine 161 and arginine 172. Position 200 (alanine 200) interacts with ATP.

Belongs to the adenylate kinase family. Monomer.

It localises to the cytoplasm. It catalyses the reaction AMP + ATP = 2 ADP. Its pathway is purine metabolism; AMP biosynthesis via salvage pathway; AMP from ADP: step 1/1. Functionally, catalyzes the reversible transfer of the terminal phosphate group between ATP and AMP. Plays an important role in cellular energy homeostasis and in adenine nucleotide metabolism. The polypeptide is Adenylate kinase (Paracoccus denitrificans (strain Pd 1222)).